The sequence spans 325 residues: Hexaprenyl-diphosphate synthase large subunit ((2E,6E)-farnesyl-diphosphate specific) (325 aa).

K45, R48, and H77 together coordinate isopentenyl diphosphate. 3 residues coordinate all-trans-hexaprenyl diphosphate: D84, D88, and R93. The Mg(2+) site is built by D84 and D88. R94 is a binding site for isopentenyl diphosphate. K170, T171, and Q208 together coordinate all-trans-hexaprenyl diphosphate.

It belongs to the FPP/GGPP synthase family. As to quaternary structure, dimer of heterodimer or heterotetramer composed of a small (Hexs-a) and large (Hexs-B) subunit. The cofactor is Mg(2+).

It carries out the reaction 3 isopentenyl diphosphate + (2E,6E)-farnesyl diphosphate = all-trans-hexaprenyl diphosphate + 3 diphosphate. Functionally, catalyzes the condensation of three molecules of isopentenyl diphosphate with farnesyl diphosphate (FPP) to yield (all-E)-hexaprenyl diphosphate (HexPP; C30), the precursor of the prenyl side chain of menaquinone-6. Large subunit Hexs-B catalyzes the condensation reaction and the final product chain length is cooperatively regulated by both the Hexs-A and Hexs-B subunits using the whole size of the hydrophobic cleft as a ruler. The protein is Hexaprenyl-diphosphate synthase large subunit ((2E,6E)-farnesyl-diphosphate specific) (hexs-b) of Micrococcus luteus (Micrococcus lysodeikticus).